Reading from the N-terminus, the 192-residue chain is Peptidyl-tRNA hydrolase (192 aa).

A tRNA-binding site is contributed by Tyr17. The Proton acceptor role is filled by His22. Positions 68, 70, and 116 each coordinate tRNA.

The protein belongs to the PTH family. In terms of assembly, monomer.

It localises to the cytoplasm. The enzyme catalyses an N-acyl-L-alpha-aminoacyl-tRNA + H2O = an N-acyl-L-amino acid + a tRNA + H(+). Functionally, hydrolyzes ribosome-free peptidyl-tRNAs (with 1 or more amino acids incorporated), which drop off the ribosome during protein synthesis, or as a result of ribosome stalling. Catalyzes the release of premature peptidyl moieties from peptidyl-tRNA molecules trapped in stalled 50S ribosomal subunits, and thus maintains levels of free tRNAs and 50S ribosomes. This is Peptidyl-tRNA hydrolase from Buchnera aphidicola subsp. Cinara cedri (strain Cc).